A 65-amino-acid polypeptide reads, in one-letter code: Large ribosomal subunit protein bL35 (65 aa).

Basic residues predominate over residues 1 to 45 (MPKMKSHSGAKKRFKKTGNGKIKRKKANKGHLLTKKNAKRKRQLR). A disordered region spans residues 1-65 (MPKMKSHSGA…RDRIKRMLST (65 aa)). Over residues 48 to 57 (VVVDDKANRD) the composition is skewed to basic and acidic residues.

Belongs to the bacterial ribosomal protein bL35 family.

The polypeptide is Large ribosomal subunit protein bL35 (Salinibacter ruber (strain DSM 13855 / M31)).